A 361-amino-acid polypeptide reads, in one-letter code: Pseudouridine-5'-phosphate glycosidase (361 aa).

The active-site Proton donor is the E27. Substrate-binding residues include K88 and V108. Position 140 (D140) interacts with Mn(2+). Residue 142–144 (SAD) participates in substrate binding. Residue K161 is the Nucleophile of the active site. The tract at residues 306-361 (DRSPTDPAAPDPTAPDPAAPDPTAPDPAAPDSAAPDLAGPDPSAPDPAAVARAHRP) is disordered. Over residues 312–333 (PAAPDPTAPDPAAPDPTAPDPA) the composition is skewed to pro residues. The segment covering 334–354 (APDSAAPDLAGPDPSAPDPAA) has biased composition (low complexity).

This sequence belongs to the pseudouridine-5'-phosphate glycosidase family. In terms of assembly, homotrimer. Mn(2+) is required as a cofactor.

It catalyses the reaction D-ribose 5-phosphate + uracil = psi-UMP + H2O. In terms of biological role, catalyzes the reversible cleavage of pseudouridine 5'-phosphate (PsiMP) to ribose 5-phosphate and uracil. Functions biologically in the cleavage direction, as part of a pseudouridine degradation pathway. The chain is Pseudouridine-5'-phosphate glycosidase from Frankia alni (strain DSM 45986 / CECT 9034 / ACN14a).